A 473-amino-acid chain; its full sequence is ATP synthase subunit beta (473 aa).

Residue 153 to 160 (GGAGVGKT) coordinates ATP.

It belongs to the ATPase alpha/beta chains family. In terms of assembly, F-type ATPases have 2 components, CF(1) - the catalytic core - and CF(0) - the membrane proton channel. CF(1) has five subunits: alpha(3), beta(3), gamma(1), delta(1), epsilon(1). CF(0) has three main subunits: a(1), b(2) and c(9-12). The alpha and beta chains form an alternating ring which encloses part of the gamma chain. CF(1) is attached to CF(0) by a central stalk formed by the gamma and epsilon chains, while a peripheral stalk is formed by the delta and b chains.

It is found in the cell inner membrane. It catalyses the reaction ATP + H2O + 4 H(+)(in) = ADP + phosphate + 5 H(+)(out). In terms of biological role, produces ATP from ADP in the presence of a proton gradient across the membrane. The catalytic sites are hosted primarily by the beta subunits. The polypeptide is ATP synthase subunit beta (Rickettsia akari (strain Hartford)).